Reading from the N-terminus, the 497-residue chain is Glycerol kinase (497 aa).

Thr-11 provides a ligand contact to ADP. Residues Thr-11, Thr-12, and Ser-13 each coordinate ATP. Sn-glycerol 3-phosphate is bound at residue Thr-11. Arg-15 is an ADP binding site. Residues Arg-81, Glu-82, Tyr-134, and Asp-244 each coordinate sn-glycerol 3-phosphate. The glycerol site is built by Arg-81, Glu-82, Tyr-134, Asp-244, and Gln-245. ADP is bound by residues Thr-266 and Gly-309. ATP is bound by residues Thr-266, Gly-309, Gln-313, and Gly-410. ADP-binding residues include Gly-410 and Asn-414.

The protein belongs to the FGGY kinase family.

The enzyme catalyses glycerol + ATP = sn-glycerol 3-phosphate + ADP + H(+). It functions in the pathway polyol metabolism; glycerol degradation via glycerol kinase pathway; sn-glycerol 3-phosphate from glycerol: step 1/1. Inhibited by fructose 1,6-bisphosphate (FBP). In terms of biological role, key enzyme in the regulation of glycerol uptake and metabolism. Catalyzes the phosphorylation of glycerol to yield sn-glycerol 3-phosphate. In Fusobacterium nucleatum subsp. nucleatum (strain ATCC 25586 / DSM 15643 / BCRC 10681 / CIP 101130 / JCM 8532 / KCTC 2640 / LMG 13131 / VPI 4355), this protein is Glycerol kinase.